A 293-amino-acid chain; its full sequence is Undecaprenyl-diphosphatase (293 aa).

Helical transmembrane passes span 107–127 (WMII…KDLI), 134–154 (MWIT…AEKV), 207–227 (FSFL…LPDA), 243–263 (IGTL…MKFV), and 268–288 (FSWF…LLWL).

It belongs to the UppP family.

It is found in the cell membrane. It carries out the reaction di-trans,octa-cis-undecaprenyl diphosphate + H2O = di-trans,octa-cis-undecaprenyl phosphate + phosphate + H(+). Catalyzes the dephosphorylation of undecaprenyl diphosphate (UPP). Confers resistance to bacitracin. This Corynebacterium efficiens (strain DSM 44549 / YS-314 / AJ 12310 / JCM 11189 / NBRC 100395) protein is Undecaprenyl-diphosphatase.